A 477-amino-acid polypeptide reads, in one-letter code: Glutamate--tRNA ligase (477 aa).

The short motif at 8 to 18 (PSPTGTLHIGT) is the 'HIGH' region element. The short motif at 247 to 251 (KLSKR) is the 'KMSKS' region element. Lys250 contributes to the ATP binding site.

The protein belongs to the class-I aminoacyl-tRNA synthetase family. Glutamate--tRNA ligase type 1 subfamily. In terms of assembly, monomer.

The protein resides in the cytoplasm. It catalyses the reaction tRNA(Glu) + L-glutamate + ATP = L-glutamyl-tRNA(Glu) + AMP + diphosphate. In terms of biological role, catalyzes the attachment of glutamate to tRNA(Glu) in a two-step reaction: glutamate is first activated by ATP to form Glu-AMP and then transferred to the acceptor end of tRNA(Glu). The protein is Glutamate--tRNA ligase of Parasynechococcus marenigrum (strain WH8102).